A 686-amino-acid chain; its full sequence is Chondroitin proteoglycan 1 (686 aa).

Residues 1-18 form the signal peptide; the sequence is MLPKSVLIVAFLVASSSA. Asparagine 46 carries an N-linked (GlcNAc...) asparagine glycan. Residues 63-120 enclose the Chitin-binding type-2 1 domain; that stretch reads DTDCSTKEDGLYAIGGCSPQFLTCSGGIARIMDCPANLIYDQRIIACEYSYNVPECSG. Cysteines 96 and 109 form a disulfide. Asparagine 143 is a glycosylation site (N-linked (GlcNAc...) asparagine). In terms of domain architecture, Chitin-binding type-2 2 spans 228 to 285; the sequence is DKTCNGKADGFYSFGQCSDHYIACSNGYTIPMQCPARLSFDEARVICDYTMNVPECQN. A disulfide bridge connects residues cysteine 261 and cysteine 274. The interval 284-312 is disordered; that stretch reads QNGSGNYEGSAEETTTEASGELPYSNGYG. Residues asparagine 285, asparagine 635, and asparagine 664 are each glycosylated (N-linked (GlcNAc...) asparagine). Positions 658–686 are disordered; it reads KLRSATNRTSTKEATTRTQNMHAHYHRNH.

Required for polar body extrusion during cytokinesis in embryo development. Affects cortical granule size. Shown to have roles in meiotic chromosome segregation, osmotic barrier function and polarization in conjunction with cpg-2. Binds chitin. The polypeptide is Chondroitin proteoglycan 1 (cpg-1) (Caenorhabditis briggsae).